Here is a 258-residue protein sequence, read N- to C-terminus: UPF0328 protein ECU02_0090 (258 aa).

The protein belongs to the UPF0328 family.

The polypeptide is UPF0328 protein ECU02_0090 (Encephalitozoon cuniculi (strain GB-M1) (Microsporidian parasite)).